Here is a 447-residue protein sequence, read N- to C-terminus: ATP-dependent protease ATPase subunit HslU (447 aa).

Residues I18, 60 to 65 (GVGKTE), D259, E325, and R397 contribute to the ATP site.

The protein belongs to the ClpX chaperone family. HslU subfamily. In terms of assembly, a double ring-shaped homohexamer of HslV is capped on each side by a ring-shaped HslU homohexamer. The assembly of the HslU/HslV complex is dependent on binding of ATP.

It is found in the cytoplasm. Its function is as follows. ATPase subunit of a proteasome-like degradation complex; this subunit has chaperone activity. The binding of ATP and its subsequent hydrolysis by HslU are essential for unfolding of protein substrates subsequently hydrolyzed by HslV. HslU recognizes the N-terminal part of its protein substrates and unfolds these before they are guided to HslV for hydrolysis. This Burkholderia pseudomallei (strain K96243) protein is ATP-dependent protease ATPase subunit HslU.